Here is a 102-residue protein sequence, read N- to C-terminus: Large ribosomal subunit protein uL24 (102 aa).

This sequence belongs to the universal ribosomal protein uL24 family. Part of the 50S ribosomal subunit.

Its function is as follows. One of two assembly initiator proteins, it binds directly to the 5'-end of the 23S rRNA, where it nucleates assembly of the 50S subunit. One of the proteins that surrounds the polypeptide exit tunnel on the outside of the subunit. The protein is Large ribosomal subunit protein uL24 of Burkholderia ambifaria (strain ATCC BAA-244 / DSM 16087 / CCUG 44356 / LMG 19182 / AMMD) (Burkholderia cepacia (strain AMMD)).